The chain runs to 325 residues: Methionyl-tRNA formyltransferase (325 aa).

111–114 serves as a coordination point for (6S)-5,6,7,8-tetrahydrofolate; the sequence is SILP.

It belongs to the Fmt family.

It carries out the reaction L-methionyl-tRNA(fMet) + (6R)-10-formyltetrahydrofolate = N-formyl-L-methionyl-tRNA(fMet) + (6S)-5,6,7,8-tetrahydrofolate + H(+). Attaches a formyl group to the free amino group of methionyl-tRNA(fMet). The formyl group appears to play a dual role in the initiator identity of N-formylmethionyl-tRNA by promoting its recognition by IF2 and preventing the misappropriation of this tRNA by the elongation apparatus. This is Methionyl-tRNA formyltransferase from Microcystis aeruginosa (strain NIES-843 / IAM M-2473).